The chain runs to 190 residues: Biphenyl-2,3-diol 1,2-dioxygenase 3 (190 aa).

The VOC domain maps to 6–125 (RLAHFVLQTN…DGNMVELQID (120 aa)). Fe cation is bound by residues histidine 9, histidine 73, and glutamate 121.

It belongs to the extradiol ring-cleavage dioxygenase family. In terms of assembly, homohexamer. Fe(2+) serves as cofactor.

It carries out the reaction biphenyl-2,3-diol + O2 = 2-hydroxy-6-oxo-6-phenylhexa-2,4-dienoate + H(+). Its pathway is xenobiotic degradation; biphenyl degradation; 2-hydroxy-2,4-pentadienoate and benzoate from biphenyl: step 3/4. This is Biphenyl-2,3-diol 1,2-dioxygenase 3 (bphC3) from Rhodococcus globerulus.